We begin with the raw amino-acid sequence, 171 residues long: Co-chaperone protein HscB homolog (171 aa).

The region spanning 2–74 is the J domain; that stretch reads NYFELFGLPI…LRRAEYLLSL (73 aa).

It belongs to the HscB family. As to quaternary structure, interacts with HscA and stimulates its ATPase activity.

Co-chaperone involved in the maturation of iron-sulfur cluster-containing proteins. Seems to help targeting proteins to be folded toward HscA. The chain is Co-chaperone protein HscB homolog from Vibrio cholerae serotype O1 (strain ATCC 39541 / Classical Ogawa 395 / O395).